We begin with the raw amino-acid sequence, 347 residues long: Histidinol-phosphate aminotransferase (347 aa).

K209 carries the post-translational modification N6-(pyridoxal phosphate)lysine.

This sequence belongs to the class-II pyridoxal-phosphate-dependent aminotransferase family. Histidinol-phosphate aminotransferase subfamily. Homodimer. Requires pyridoxal 5'-phosphate as cofactor.

It carries out the reaction L-histidinol phosphate + 2-oxoglutarate = 3-(imidazol-4-yl)-2-oxopropyl phosphate + L-glutamate. Its pathway is amino-acid biosynthesis; L-histidine biosynthesis; L-histidine from 5-phospho-alpha-D-ribose 1-diphosphate: step 7/9. The chain is Histidinol-phosphate aminotransferase from Geotalea uraniireducens (strain Rf4) (Geobacter uraniireducens).